Here is a 254-residue protein sequence, read N- to C-terminus: UPF0246 protein lpp1320 (254 aa).

Belongs to the UPF0246 family.

The protein is UPF0246 protein lpp1320 of Legionella pneumophila (strain Paris).